A 384-amino-acid chain; its full sequence is MHSSGSSFAKAGHEPGPPLWLLAELTYRCPLQCPYCSNPLDFAKQGAELSTAEWIEVFRQARELGAAQLGFSGGEPLVRQDLAELIAAARGLGYYTNLITSGIGLTEARIAEFADAGLDHIQISFQAADEEVNNLLAGSKKAFAQKLAMARAVKAHGYPMVLNFVTHRHNIDNIERIIELCLELEADFVELATCQFYGWAELNRAGLLPTRAQLERAERITNQWRDKLAAENHPCKLIFVTPDYYEERPKACMNGWGNLFLDITPDGTALPCHSARQLPVQFPNVREHSVEHIWRHSFGFNRFRGDDWMPEPCRSCDEKHKDFGGCRCQAFMLTGDASNADPVCSKSAHHEVILAARRQADEAPLGLGELQYRNDKASRIICKA.

Positions 15–231 (PGPPLWLLAE…NQWRDKLAAE (217 aa)) constitute a Radical SAM core domain. Residues Cys29, Cys33, and Cys36 each contribute to the [4Fe-4S] cluster site.

Belongs to the radical SAM superfamily. PqqE family. Interacts with PqqD. The interaction is necessary for activity of PqqE. It depends on [4Fe-4S] cluster as a cofactor.

The catalysed reaction is [PQQ precursor protein] + S-adenosyl-L-methionine = E-Y cross-linked-[PQQ precursor protein] + 5'-deoxyadenosine + L-methionine + H(+). It functions in the pathway cofactor biosynthesis; pyrroloquinoline quinone biosynthesis. Its function is as follows. Catalyzes the cross-linking of a glutamate residue and a tyrosine residue in the PqqA protein as part of the biosynthesis of pyrroloquinoline quinone (PQQ). The protein is PqqA peptide cyclase of Ectopseudomonas mendocina (strain ymp) (Pseudomonas mendocina).